The chain runs to 934 residues: Replication factor C subunit 1 (934 aa).

Residues 1–190 (MSNSDIRSFF…RSSKSKGLPR (190 aa)) form a disordered region. The residue at position 27 (serine 27) is a Phosphoserine. Residues 29-39 (KPKRSLKKKRI) are compositionally biased toward basic residues. A compositionally biased stretch (polar residues) spans 89–104 (GVSTTPDEYFEQQSTR). A compositionally biased stretch (basic and acidic residues) spans 118-128 (TTSKDVVHPVK). Over residues 165–186 (TSKSKSHTTTATTHTSRSSKSK) the composition is skewed to low complexity. The BRCT domain maps to 236–326 (GNSDCLSGIS…PASGGTGAAA (91 aa)). ATP contacts are provided by residues threonine 362, cysteine 374, 416–423 (GPPGIGKT), and asparagine 519. Residues 876-895 (AEDEMLEEASDSEAANEEDI) show a composition bias toward acidic residues. A disordered region spans residues 876 to 934 (AEDEMLEEASDSEAANEEDIDLSKDKFISVPKKPKKRTKAKAEASSSSSTSRRSRKKTA).

This sequence belongs to the activator 1 large subunit family. As to quaternary structure, heteropentamer of subunits rfc1, rfc2, rfc3, rfc4 and rfc5 that forms a complex (RFC) with PCNA in the presence of ATP. Interacts with cdc24.

The protein resides in the nucleus. It localises to the nucleolus. In terms of biological role, the elongation of primed DNA templates by DNA polymerase delta and epsilon requires the action of the accessory proteins PCNA and activator 1. Subunit 1 is essential for cell cycle progression. It may associate with components of the DNA replication machinery and serve to enhance the efficiency of DNA replication. The protein is Replication factor C subunit 1 (rfc1) of Schizosaccharomyces pombe (strain 972 / ATCC 24843) (Fission yeast).